The sequence spans 317 residues: Melanocyte-stimulating hormone receptor (317 aa).

Topologically, residues 1-37 (MPMQGAQRRLLGSLNSIPTATPNLGLAANHTGAPCLE) are extracellular. N29 is a glycosylation site (N-linked (GlcNAc...) asparagine). A helical membrane pass occupies residues 38–63 (VSIPDWLFLSLGLVSLVQNVLVVAAI). Over 64–72 (AKNRNLHSP) the chain is Cytoplasmic. A helical transmembrane segment spans residues 73–93 (MYCFICCLALSDLLVSGSNML). Over 94–118 (ETAVILMLEAGALATRASVVQQLQN) the chain is Extracellular. A helical transmembrane segment spans residues 119-140 (TIDVLTCSSMLCSLCFLGAIAL). Over 141 to 163 (DRYVSIFYALRYHSIVTLPRARR) the chain is Cytoplasmic. The chain crosses the membrane as a helical span at residues 164–183 (AIAATWVASVLSSTLFIAYC). Over 184 to 191 (DHAAVLLC) the chain is Extracellular. Residues 192–211 (LVVFFLAMLVLMAVLYVHML) traverse the membrane as a helical segment. Topologically, residues 212–240 (ARACQHAQGITRLHKRQLPAHQGFGLRGA) are cytoplasmic. Residues 241–266 (ATLTILLGIFFLCWGPFFLHLMLVVL) form a helical membrane-spanning segment. Residues 267–279 (CPQHLTCSCIFKN) are Extracellular-facing. A helical membrane pass occupies residues 280 to 300 (FKVFLTLIICNTIIDPLIYAF). At 301-317 (RSQELCRTLKEVLLCSW) the chain is on the cytoplasmic side. C315 carries the S-palmitoyl cysteine lipid modification.

It belongs to the G-protein coupled receptor 1 family. As to quaternary structure, interacts with MGRN1, but does not undergo MGRN1-mediated ubiquitination; this interaction competes with GNAS-binding and thus inhibits agonist-induced cAMP production. Interacts with OPN3; the interaction results in a decrease in MC1R-mediated cAMP signaling and ultimately a decrease in melanin production in melanocytes.

The protein localises to the cell membrane. In terms of biological role, receptor for MSH (alpha, beta and gamma) and ACTH. The activity of this receptor is mediated by G proteins which activate adenylate cyclase. Mediates melanogenesis, the production of eumelanin (black/brown) and phaeomelanin (red/yellow), via regulation of cAMP signaling in melanocytes. The chain is Melanocyte-stimulating hormone receptor (MC1R) from Alouatta seniculus (Red howler monkey).